A 529-amino-acid chain; its full sequence is ADP,ATP carrier protein 1 (529 aa).

12 consecutive transmembrane segments (helical) span residues 24–44, 63–83, 93–113, 124–144, 149–169, 184–204, 220–240, 284–304, 322–342, 356–376, 381–401, and 463–483; these read LKKVLPMFLMFFCISFNYTIL, IPFIKLWLVVPSAVVFMLIYA, ALFYAVLSPFVVFFALFPLVI, DFADTLQAILPSGFLGFIAML, FAAFYVLSELWGSVMLSLMFW, FYALFGVGANVALLISGPAIV, WGVTLYFLMAMFLCSCAIIAA, YMLLLALLVICYGVCINLVEV, AFMGTFSFWTGVVSVFVMLFI, ALVTPVMVLVTGAIFFALVIF, TGLVAALGTTPLMLAVVVGAV, and ISAMTPFLAVALFAIIMVWLT. Over residues 509–520 the composition is skewed to low complexity; sequence AAEKEASPAAKE. The interval 509–529 is disordered; the sequence is AAEKEASPAAKEVSPAIEGVS.

This sequence belongs to the ADP/ATP translocase tlc family.

Its subcellular location is the cell membrane. The chain is ADP,ATP carrier protein 1 (tlcA) from Chlamydia muridarum (strain MoPn / Nigg).